The chain runs to 781 residues: Molybdenum cofactor sulfurase (781 aa).

Position 246 is an N6-(pyridoxal phosphate)lysine (Lys246). Cys413 is an active-site residue. Residues 619 to 781 (GDAVAQWLSE…MTCGDVVIVE (163 aa)) enclose the MOSC domain. Phosphoserine is present on Ser734.

It belongs to the class-V pyridoxal-phosphate-dependent aminotransferase family. MOCOS subfamily. Pyridoxal 5'-phosphate is required as a cofactor.

It carries out the reaction Mo-molybdopterin + L-cysteine + AH2 = thio-Mo-molybdopterin + L-alanine + A + H2O. The protein operates within cofactor biosynthesis; molybdopterin biosynthesis. Sulfurates the molybdenum cofactor. Sulfation of molybdenum is essential for xanthine dehydrogenase (XDH) and aldehyde oxidase (ADO) enzymes in which molybdenum cofactor is liganded by 1 oxygen and 1 sulfur atom in active form. The chain is Molybdenum cofactor sulfurase from Drosophila erecta (Fruit fly).